Here is a 48-residue protein sequence, read N- to C-terminus: Large ribosomal subunit protein bL33 (48 aa).

Belongs to the bacterial ribosomal protein bL33 family.

The sequence is that of Large ribosomal subunit protein bL33 from Streptococcus mutans serotype c (strain ATCC 700610 / UA159).